We begin with the raw amino-acid sequence, 152 residues long: MAGSLNKVILIGNVGRDPEIRTTGEGKKIINLSLATTETWKDRITSERKERTEWHRVVIFSEGLVSVVERYVTKGSKLYIEGSLQTRKWNDNSGQEKYTTEVVLQNFNSQLILLDSKNSNNHTQDSGRSEYKHPEAKNHSFDHSDLDDEIPF.

The SSB domain maps to Leu5–Leu111. The DNA-binding element occupies Trp54–Phe60. A compositionally biased stretch (polar residues) spans Asp115 to Gln124. Positions Asp115 to Phe152 are disordered. A compositionally biased stretch (basic and acidic residues) spans Asp125 to Ser144. Positions Asp147–Phe152 match the Important for interaction with partner proteins motif.

As to quaternary structure, homotetramer.

In terms of biological role, plays an important role in DNA replication, recombination and repair. Binds to ssDNA and to an array of partner proteins to recruit them to their sites of action during DNA metabolism. This chain is Single-stranded DNA-binding protein (ssb), found in Rickettsia felis (strain ATCC VR-1525 / URRWXCal2) (Rickettsia azadi).